The chain runs to 82 residues: Small ribosomal subunit protein uS17 (82 aa).

It belongs to the universal ribosomal protein uS17 family. Part of the 30S ribosomal subunit.

In terms of biological role, one of the primary rRNA binding proteins, it binds specifically to the 5'-end of 16S ribosomal RNA. This chain is Small ribosomal subunit protein uS17, found in Shewanella piezotolerans (strain WP3 / JCM 13877).